Here is a 371-residue protein sequence, read N- to C-terminus: tRNA-specific 2-thiouridylase MnmA (371 aa).

ATP-binding positions include Ala-24–Ser-31 and Leu-50. Residue Cys-119 is the Nucleophile of the active site. An intrachain disulfide couples Cys-119 to Cys-215. Gly-143 lines the ATP pocket. The interval Lys-165–Gln-167 is interaction with tRNA. Cys-215 serves as the catalytic Cysteine persulfide intermediate.

The protein belongs to the MnmA/TRMU family.

It localises to the cytoplasm. It carries out the reaction S-sulfanyl-L-cysteinyl-[protein] + uridine(34) in tRNA + AH2 + ATP = 2-thiouridine(34) in tRNA + L-cysteinyl-[protein] + A + AMP + diphosphate + H(+). Functionally, catalyzes the 2-thiolation of uridine at the wobble position (U34) of tRNA, leading to the formation of s(2)U34. This is tRNA-specific 2-thiouridylase MnmA from Neorickettsia sennetsu (strain ATCC VR-367 / Miyayama) (Ehrlichia sennetsu).